Consider the following 145-residue polypeptide: Putative antiporter subunit mnhG2 (145 aa).

3 helical membrane passes run 11–31 (IAAVMLLLGSFIALISAIGIV), 51–71 (VLLTLIGVLIYFIVNTGFFSV), and 72–92 (RLLLSLVFINLTSPVGMHLVA).

This sequence belongs to the CPA3 antiporters (TC 2.A.63) subunit G family. May form a heterooligomeric complex that consists of seven subunits: mnhA2, mnhB2, mnhC2, mnhD2, mnhE2, mnhF2 and mnhG2.

The protein resides in the cell membrane. The polypeptide is Putative antiporter subunit mnhG2 (mnhG2) (Staphylococcus aureus (strain MRSA252)).